Here is a 330-residue protein sequence, read N- to C-terminus: DNA-directed RNA polymerase subunit alpha (330 aa).

The tract at residues 1-236 (MQGSVTEFLK…EQLDAFVDLR (236 aa)) is alpha N-terminal domain (alpha-NTD). Residues 250–330 (FDPILLRPVD…NWPPASIAED (81 aa)) form an alpha C-terminal domain (alpha-CTD) region.

This sequence belongs to the RNA polymerase alpha chain family. In terms of assembly, homodimer. The RNAP catalytic core consists of 2 alpha, 1 beta, 1 beta' and 1 omega subunit. When a sigma factor is associated with the core the holoenzyme is formed, which can initiate transcription.

It catalyses the reaction RNA(n) + a ribonucleoside 5'-triphosphate = RNA(n+1) + diphosphate. DNA-dependent RNA polymerase catalyzes the transcription of DNA into RNA using the four ribonucleoside triphosphates as substrates. The sequence is that of DNA-directed RNA polymerase subunit alpha from Vibrio parahaemolyticus serotype O3:K6 (strain RIMD 2210633).